Reading from the N-terminus, the 396-residue chain is THAP domain-containing protein 5 (396 aa).

Residues 2–85 (MPRYCAAICC…LKQTAVPTIF (84 aa)) form a THAP-type zinc finger. A disordered region spans residues 86 to 113 (SLPEDNQGKDPSKKKSQKKNLEDEKEVC). Residues 91–113 (NQGKDPSKKKSQKKNLEDEKEVC) show a composition bias toward basic and acidic residues. Positions 322–325 (EHSY) match the HCFC1-binding motif (HBM) motif. Positions 349–382 (LELKEQQTLGRLKSLEALVRQLKQENWLSEENVK) form a coiled coil.

In terms of assembly, interacts with HTRA2; under apoptotic conditions. Interacts with ABRAXAS2. Post-translationally, cleaved by HTRA2 during apoptosis.

Its subcellular location is the nucleus. Its function is as follows. Has sequence-specific DNA-binding activity and can function as transcriptional repressor (in vitro). May be a regulator of cell cycle: THAP5 overexpression in human cell lines causes cell cycle arrest at G2/M phase. In Macaca fascicularis (Crab-eating macaque), this protein is THAP domain-containing protein 5 (THAP5).